A 393-amino-acid polypeptide reads, in one-letter code: Lipid-A-disaccharide synthase (393 aa).

It belongs to the LpxB family.

It catalyses the reaction a lipid X + a UDP-2-N,3-O-bis[(3R)-3-hydroxyacyl]-alpha-D-glucosamine = a lipid A disaccharide + UDP + H(+). Its pathway is bacterial outer membrane biogenesis; LPS lipid A biosynthesis. Condensation of UDP-2,3-diacylglucosamine and 2,3-diacylglucosamine-1-phosphate to form lipid A disaccharide, a precursor of lipid A, a phosphorylated glycolipid that anchors the lipopolysaccharide to the outer membrane of the cell. The chain is Lipid-A-disaccharide synthase from Actinobacillus pleuropneumoniae serotype 3 (strain JL03).